The primary structure comprises 177 residues: Peptide methionine sulfoxide reductase MsrA (177 aa).

Cys-11 is a catalytic residue.

This sequence belongs to the MsrA Met sulfoxide reductase family.

It catalyses the reaction L-methionyl-[protein] + [thioredoxin]-disulfide + H2O = L-methionyl-(S)-S-oxide-[protein] + [thioredoxin]-dithiol. The catalysed reaction is [thioredoxin]-disulfide + L-methionine + H2O = L-methionine (S)-S-oxide + [thioredoxin]-dithiol. Functionally, has an important function as a repair enzyme for proteins that have been inactivated by oxidation. Catalyzes the reversible oxidation-reduction of methionine sulfoxide in proteins to methionine. This Picrophilus torridus (strain ATCC 700027 / DSM 9790 / JCM 10055 / NBRC 100828 / KAW 2/3) protein is Peptide methionine sulfoxide reductase MsrA.